The following is a 431-amino-acid chain: Adenylosuccinate synthetase (431 aa).

Residues 12-18 (GDEGKGK) and 40-42 (GHT) each bind GTP. Aspartate 13 functions as the Proton acceptor in the catalytic mechanism. The Mg(2+) site is built by aspartate 13 and glycine 40. IMP-binding positions include 13 to 16 (DEGK), 38 to 41 (NAGH), threonine 131, arginine 145, glutamine 225, threonine 240, and arginine 304. The active-site Proton donor is histidine 41. 300-306 (VNTGRPR) provides a ligand contact to substrate. GTP contacts are provided by residues arginine 306, 332-334 (KLD), and 414-416 (STS).

The protein belongs to the adenylosuccinate synthetase family. In terms of assembly, homodimer. Mg(2+) serves as cofactor.

It localises to the cytoplasm. The enzyme catalyses IMP + L-aspartate + GTP = N(6)-(1,2-dicarboxyethyl)-AMP + GDP + phosphate + 2 H(+). The protein operates within purine metabolism; AMP biosynthesis via de novo pathway; AMP from IMP: step 1/2. Plays an important role in the de novo pathway of purine nucleotide biosynthesis. Catalyzes the first committed step in the biosynthesis of AMP from IMP. The polypeptide is Adenylosuccinate synthetase (Rhizobium rhizogenes (strain K84 / ATCC BAA-868) (Agrobacterium radiobacter)).